Here is a 165-residue protein sequence, read N- to C-terminus: Pyruvoyl-dependent arginine decarboxylase 1 (165 aa).

Ser-45 bears the Pyruvic acid (Ser) mark.

Belongs to the PdaD family. Pyruvate serves as cofactor.

The enzyme catalyses L-arginine + H(+) = agmatine + CO2. The sequence is that of Pyruvoyl-dependent arginine decarboxylase 1 (pdaD1) from Methanosarcina mazei (strain ATCC BAA-159 / DSM 3647 / Goe1 / Go1 / JCM 11833 / OCM 88) (Methanosarcina frisia).